We begin with the raw amino-acid sequence, 332 residues long: Glycerol-3-phosphate dehydrogenase [NAD(P)+] (332 aa).

Residues W13, R33, and K107 each coordinate NADPH. 3 residues coordinate sn-glycerol 3-phosphate: K107, G136, and S138. A140 is a binding site for NADPH. The sn-glycerol 3-phosphate site is built by K191, D244, S254, R255, and N256. K191 acts as the Proton acceptor in catalysis. An NADPH-binding site is contributed by R255. E280 contributes to the NADPH binding site.

It belongs to the NAD-dependent glycerol-3-phosphate dehydrogenase family.

It is found in the cytoplasm. It carries out the reaction sn-glycerol 3-phosphate + NAD(+) = dihydroxyacetone phosphate + NADH + H(+). The enzyme catalyses sn-glycerol 3-phosphate + NADP(+) = dihydroxyacetone phosphate + NADPH + H(+). It functions in the pathway membrane lipid metabolism; glycerophospholipid metabolism. Catalyzes the reduction of the glycolytic intermediate dihydroxyacetone phosphate (DHAP) to sn-glycerol 3-phosphate (G3P), the key precursor for phospholipid synthesis. This is Glycerol-3-phosphate dehydrogenase [NAD(P)+] from Alkalilimnicola ehrlichii (strain ATCC BAA-1101 / DSM 17681 / MLHE-1).